The following is a 157-amino-acid chain: Crossover junction endodeoxyribonuclease RuvC (157 aa).

Catalysis depends on residues aspartate 7, glutamate 67, and aspartate 140. Mg(2+) is bound by residues aspartate 7, glutamate 67, and aspartate 140.

Belongs to the RuvC family. Homodimer which binds Holliday junction (HJ) DNA. The HJ becomes 2-fold symmetrical on binding to RuvC with unstacked arms; it has a different conformation from HJ DNA in complex with RuvA. In the full resolvosome a probable DNA-RuvA(4)-RuvB(12)-RuvC(2) complex forms which resolves the HJ. The cofactor is Mg(2+).

It localises to the cytoplasm. It carries out the reaction Endonucleolytic cleavage at a junction such as a reciprocal single-stranded crossover between two homologous DNA duplexes (Holliday junction).. Functionally, the RuvA-RuvB-RuvC complex processes Holliday junction (HJ) DNA during genetic recombination and DNA repair. Endonuclease that resolves HJ intermediates. Cleaves cruciform DNA by making single-stranded nicks across the HJ at symmetrical positions within the homologous arms, yielding a 5'-phosphate and a 3'-hydroxyl group; requires a central core of homology in the junction. The consensus cleavage sequence is 5'-(A/T)TT(C/G)-3'. Cleavage occurs on the 3'-side of the TT dinucleotide at the point of strand exchange. HJ branch migration catalyzed by RuvA-RuvB allows RuvC to scan DNA until it finds its consensus sequence, where it cleaves and resolves the cruciform DNA. This is Crossover junction endodeoxyribonuclease RuvC from Rickettsia rickettsii (strain Iowa).